Consider the following 237-residue polypeptide: Transcriptional regulatory protein YvrH (237 aa).

Positions 5–119 (SILIVDDEKA…ELAARIRAHL (115 aa)) constitute a Response regulatory domain. A 4-aspartylphosphate modification is found at Asp-55. Residues 131-230 (NQTYTYDYFT…VRGLGYRFIP (100 aa)) constitute a DNA-binding region (ompR/PhoB-type).

In terms of processing, phosphorylated by YvrG.

The protein localises to the cytoplasm. In terms of biological role, member of the two-component regulatory system YvrG/YvrH that positively regulates 7 transcriptional units (wprA, wapA-yxxG, dltABCDE, sunA, sunT-bdbA-yolJ-bdbB, sigO-rsoA, and sigX-rsiX), and negatively regulates the lytABC operon. This chain is Transcriptional regulatory protein YvrH (yvrH), found in Bacillus subtilis (strain 168).